The sequence spans 486 residues: Sensor protein PhoQ (486 aa).

The Cytoplasmic segment spans residues 1 to 16; it reads MKKLLHLFFPLSLRVR. A helical membrane pass occupies residues 17 to 37; the sequence is FLLATAAVVLVLSLAYGMVAL. Residues 38–194 lie on the Periplasmic side of the membrane; the sequence is IGYSVSFDKT…LKSSYMVWSW (157 aa). 2 residues coordinate a divalent metal cation: Asp-151 and Asp-152. Residues 195 to 215 form a helical membrane-spanning segment; that stretch reads FIYVLSANLLLVIPLLWVAAW. The 52-residue stretch at 215–266 folds into the HAMP domain; sequence WWSLRPIEALAKEVRELEEHNRELLNPATTRELTSLVRNLNRLLKSERERYD. The Cytoplasmic portion of the chain corresponds to 216 to 486; it reads WSLRPIEALA…GRQHSTPKDE (271 aa). In terms of domain architecture, Histidine kinase spans 274–480; sequence DLTHSLKTPL…RMEVIFGRQH (207 aa). Position 277 is a phosphohistidine; by autocatalysis (His-277). A Mg(2+)-binding site is contributed by Asn-385. Residues 385–393, 415–420, and 434–446 contribute to the ATP site; these read NVLDNACKY, DDGPGI, and RVDTLRPGQGVGL. Gln-442 is a binding site for Mg(2+).

Homodimer.

The protein resides in the cell inner membrane. The catalysed reaction is ATP + protein L-histidine = ADP + protein N-phospho-L-histidine.. In terms of biological role, member of the two-component regulatory system PhoP/PhoQ involved in virulence, adaptation to low Mg(2+) environments and the control of acid resistance genes. In low periplasmic Mg(2+), PhoQ functions as a membrane-associated protein kinase that undergoes autophosphorylation and subsequently transfers the phosphate to PhoP, resulting in the expression of PhoP-activated genes (PAG) and repression of PhoP-repressed genes (PRG). In high periplasmic Mg(2+), acts as a protein phosphatase that dephosphorylates phospho-PhoP, which results in the repression of PG and may lead to expression of some PRG. This is Sensor protein PhoQ (phoQ) from Escherichia coli O157:H7.